We begin with the raw amino-acid sequence, 271 residues long: L-aspartate dehydrogenase (271 aa).

The NAD(+) site is built by A124 and N192. H222 is an active-site residue.

The protein belongs to the L-aspartate dehydrogenase family.

The catalysed reaction is L-aspartate + NADP(+) + H2O = oxaloacetate + NH4(+) + NADPH + H(+). It carries out the reaction L-aspartate + NAD(+) + H2O = oxaloacetate + NH4(+) + NADH + H(+). It functions in the pathway cofactor biosynthesis; NAD(+) biosynthesis; iminoaspartate from L-aspartate (dehydrogenase route): step 1/1. Its function is as follows. Specifically catalyzes the NAD or NADP-dependent dehydrogenation of L-aspartate to iminoaspartate. The sequence is that of L-aspartate dehydrogenase from Methanosarcina acetivorans (strain ATCC 35395 / DSM 2834 / JCM 12185 / C2A).